The primary structure comprises 384 residues: 8-amino-7-oxononanoate synthase (384 aa).

Residue Arg23 participates in substrate binding. 110 to 111 (GF) serves as a coordination point for pyridoxal 5'-phosphate. His135 contacts substrate. The pyridoxal 5'-phosphate site is built by Ser179, His206, and Thr232. Residue Lys235 is modified to N6-(pyridoxal phosphate)lysine. Residue Thr348 coordinates substrate.

Belongs to the class-II pyridoxal-phosphate-dependent aminotransferase family. BioF subfamily. In terms of assembly, homodimer. Requires pyridoxal 5'-phosphate as cofactor.

It carries out the reaction 6-carboxyhexanoyl-[ACP] + L-alanine + H(+) = (8S)-8-amino-7-oxononanoate + holo-[ACP] + CO2. Its pathway is cofactor biosynthesis; biotin biosynthesis. Its function is as follows. Catalyzes the decarboxylative condensation of pimeloyl-[acyl-carrier protein] and L-alanine to produce 8-amino-7-oxononanoate (AON), [acyl-carrier protein], and carbon dioxide. The sequence is that of 8-amino-7-oxononanoate synthase from Vibrio cholerae serotype O1 (strain ATCC 39315 / El Tor Inaba N16961).